A 304-amino-acid polypeptide reads, in one-letter code: Protoheme IX farnesyltransferase (304 aa).

9 helical membrane passes run 31–51 (VNTL…PDGL), 58–78 (VAAT…NCLI), 99–119 (LAPA…LTVL), 126–146 (LTMW…TVLL), 154–174 (IVIG…AVTG), 180–200 (ALLL…ALAL), 222–242 (FTRL…LLPF), 243–263 (ATRM…IGFL), and 284–304 (FSIL…YLPL).

It belongs to the UbiA prenyltransferase family. Protoheme IX farnesyltransferase subfamily.

The protein resides in the cell inner membrane. It carries out the reaction heme b + (2E,6E)-farnesyl diphosphate + H2O = Fe(II)-heme o + diphosphate. It functions in the pathway porphyrin-containing compound metabolism; heme O biosynthesis; heme O from protoheme: step 1/1. Its function is as follows. Converts heme B (protoheme IX) to heme O by substitution of the vinyl group on carbon 2 of heme B porphyrin ring with a hydroxyethyl farnesyl side group. In Aromatoleum aromaticum (strain DSM 19018 / LMG 30748 / EbN1) (Azoarcus sp. (strain EbN1)), this protein is Protoheme IX farnesyltransferase.